The chain runs to 2281 residues: Protein Ycf2 (2281 aa).

1635–1642 (GSIGSGRS) is a binding site for ATP.

It belongs to the Ycf2 family.

Its subcellular location is the plastid. It localises to the chloroplast stroma. Functionally, probable ATPase of unknown function. Its presence in a non-photosynthetic plant (Epifagus virginiana) and experiments in tobacco indicate that it has an essential function which is probably not related to photosynthesis. This Coffea arabica (Arabian coffee) protein is Protein Ycf2.